A 485-amino-acid chain; its full sequence is Subtilisin-like protease 1 (485 aa).

A signal peptide spans 1–19 (MGIFRFISISLAAVSAANA). A propeptide spanning residues 20-116 (GHILSMGHAK…VEPDTTITIH (97 aa)) is cleaved from the precursor. Positions 34–116 (SYIVVMKDGT…VEPDTTITIH (83 aa)) constitute an Inhibitor I9 domain. One can recognise a Peptidase S8 domain in the interval 126-400 (SWGLARISSQ…NILINNGDAK (275 aa)). Residues D158 and H190 each act as charge relay system in the active site. N251 carries an N-linked (GlcNAc...) asparagine glycan. Residue S345 is the Charge relay system of the active site. Residues 377-394 (GTSSVTNPGPGTRTNILI) are compositionally biased toward polar residues. Residues 377–462 (GTSSVTNPGP…HTPFPNDDFN (86 aa)) form a disordered region. Pro residues predominate over residues 409–418 (PSQPPKPSQP). The segment covering 419–428 (SKPQQPSEPQ) has biased composition (low complexity). Pro residues predominate over residues 433–455 (PQEPAPGQPAPAPAPVPQHPHTP).

Belongs to the peptidase S8 family.

The protein localises to the secreted. Functionally, secreted subtilisin-like serine protease with keratinolytic activity that contributes to pathogenicity. This Arthroderma otae (strain ATCC MYA-4605 / CBS 113480) (Microsporum canis) protein is Subtilisin-like protease 1 (SUB1).